A 537-amino-acid chain; its full sequence is CTP synthase (537 aa).

Positions 1–268 are amidoligase domain; sequence MGETKYIFVT…DSTILEKMGL (268 aa). Position 15 (Ser-15) interacts with CTP. Ser-15 provides a ligand contact to UTP. 16–21 contacts ATP; that stretch reads SLGKGI. Tyr-56 contacts L-glutamine. ATP is bound at residue Asp-73. Asp-73 and Glu-143 together coordinate Mg(2+). CTP-binding positions include 150-152, 189-194, and Lys-225; these read DIE and KTKPTQ. UTP is bound by residues 189 to 194 and Lys-225; that span reads KTKPTQ. Positions 296–537 constitute a Glutamine amidotransferase type-1 domain; sequence NIALVGKYDL…VKAAIENEKN (242 aa). Gly-357 contacts L-glutamine. The active-site Nucleophile; for glutamine hydrolysis is Cys-384. L-glutamine contacts are provided by residues 385–388, Glu-408, and Arg-465; that span reads LGMQ. Active-site residues include His-510 and Glu-512.

This sequence belongs to the CTP synthase family. In terms of assembly, homotetramer.

It catalyses the reaction UTP + L-glutamine + ATP + H2O = CTP + L-glutamate + ADP + phosphate + 2 H(+). The catalysed reaction is L-glutamine + H2O = L-glutamate + NH4(+). It carries out the reaction UTP + NH4(+) + ATP = CTP + ADP + phosphate + 2 H(+). It functions in the pathway pyrimidine metabolism; CTP biosynthesis via de novo pathway; CTP from UDP: step 2/2. With respect to regulation, allosterically activated by GTP, when glutamine is the substrate; GTP has no effect on the reaction when ammonia is the substrate. The allosteric effector GTP functions by stabilizing the protein conformation that binds the tetrahedral intermediate(s) formed during glutamine hydrolysis. Inhibited by the product CTP, via allosteric rather than competitive inhibition. In terms of biological role, catalyzes the ATP-dependent amination of UTP to CTP with either L-glutamine or ammonia as the source of nitrogen. Regulates intracellular CTP levels through interactions with the four ribonucleotide triphosphates. The chain is CTP synthase from Bacteroides thetaiotaomicron (strain ATCC 29148 / DSM 2079 / JCM 5827 / CCUG 10774 / NCTC 10582 / VPI-5482 / E50).